A 208-amino-acid polypeptide reads, in one-letter code: Large ribosomal subunit protein bL17 (208 aa).

The interval 122 to 208 is disordered; sequence TEKKKKKPAK…ASEEAPPKTE (87 aa). Residues 151 to 179 are compositionally biased toward low complexity; it reads ADTPAPAAEESAPAKAAEPEAEAAAPEAE.

This sequence belongs to the bacterial ribosomal protein bL17 family. Part of the 50S ribosomal subunit. Contacts protein L32.

This chain is Large ribosomal subunit protein bL17, found in Desulfosudis oleivorans (strain DSM 6200 / JCM 39069 / Hxd3) (Desulfococcus oleovorans).